A 583-amino-acid polypeptide reads, in one-letter code: Membrane protein insertase YidC (583 aa).

Residues 5 to 25 (SVTGLALIALIMIVWLQFMSP) form a helical membrane-spanning segment. The disordered stretch occupies residues 28-50 (KSVQPDNRPKAQTTATVSQEKTE). The segment covering 37–46 (KAQTTATVSQ) has biased composition (polar residues). Transmembrane regions (helical) follow at residues 341–361 (PFAE…ISNY), 362–382 (GLII…LSMA), 427–447 (LGGC…FYVF), 477–497 (IPVY…TVFI), and 515–535 (LYIF…GLGL).

Belongs to the OXA1/ALB3/YidC family. Type 1 subfamily. Interacts with the Sec translocase complex via SecD. Specifically interacts with transmembrane segments of nascent integral membrane proteins during membrane integration.

It is found in the cell inner membrane. Required for the insertion and/or proper folding and/or complex formation of integral membrane proteins into the membrane. Involved in integration of membrane proteins that insert both dependently and independently of the Sec translocase complex, as well as at least some lipoproteins. Aids folding of multispanning membrane proteins. The polypeptide is Membrane protein insertase YidC (Chlorobium limicola (strain DSM 245 / NBRC 103803 / 6330)).